Consider the following 260-residue polypeptide: Small ribosomal subunit protein eS1 (260 aa).

At Ala2 the chain carries N-acetylalanine; partial.

This sequence belongs to the eukaryotic ribosomal protein eS1 family. As to quaternary structure, component of the small ribosomal subunit. Mature ribosomes consist of a small (40S) and a large (60S) subunit. The 40S subunit contains about 33 different proteins and 1 molecule of RNA (18S). The 60S subunit contains about 49 different proteins and 3 molecules of RNA (25S, 5.8S and 5S).

The protein localises to the cytoplasm. This Mycosarcoma maydis (Corn smut fungus) protein is Small ribosomal subunit protein eS1.